The sequence spans 619 residues: ATP-dependent zinc metalloprotease FtsH (619 aa).

Topologically, residues 1–11 (MDKQSKFRIKT) are cytoplasmic. Residues 12–32 (FFKKIIFFLIIFCFFYFFNFI) traverse the membrane as a helical segment. Residues 33–131 (KKTKKITHTT…FKNYKIYTVL (99 aa)) are Periplasmic-facing. Residues 132–152 (NFFYDYGFFLMIIIICWIFIF) traverse the membrane as a helical segment. Over 153-619 (RKIASRSSES…FKEDFASILD (467 aa)) the chain is Cytoplasmic. 224-231 (GPPGTGKT) serves as a coordination point for ATP. Histidine 447 provides a ligand contact to Zn(2+). The active site involves glutamate 448. Positions 451 and 522 each coordinate Zn(2+).

This sequence in the central section; belongs to the AAA ATPase family. In the C-terminal section; belongs to the peptidase M41 family. As to quaternary structure, homohexamer. It depends on Zn(2+) as a cofactor.

It is found in the cell inner membrane. Its function is as follows. Acts as a processive, ATP-dependent zinc metallopeptidase for both cytoplasmic and membrane proteins. Plays a role in the quality control of integral membrane proteins. This is ATP-dependent zinc metalloprotease FtsH from Karelsulcia muelleri (strain DMIN) (Sulcia muelleri).